Here is a 122-residue protein sequence, read N- to C-terminus: Biogenesis of lysosome-related organelles complex 1 subunit BLS1 (122 aa).

Serine 33 is subject to Phosphoserine.

This sequence belongs to the BLOC1S1 family. In terms of assembly, component of the biogenesis of lysosome-related organelles complex-1 (BLOC-1) composed of at least BLI1, BLS1, CNL1, KXD1, SNN1 and VAB2.

It is found in the endosome. Functionally, component of the biogenesis of lysosome-related organelles complex-1 (BLOC-1), a complex involved in endosomal cargo sorting. In Saccharomyces cerevisiae (strain YJM789) (Baker's yeast), this protein is Biogenesis of lysosome-related organelles complex 1 subunit BLS1 (BLS1).